We begin with the raw amino-acid sequence, 57 residues long: MARRRKYEGLNPFVAAGLIKFSEEGELERIKLNPRTAILVSITVIIAILVLNILHPL.

Over methionine 1–asparagine 33 the chain is Cytoplasmic. A helical transmembrane segment spans residues proline 34–histidine 55. Residues proline 56–leucine 57 lie on the Extracellular side of the membrane.

Belongs to the SEC61-beta family. In terms of assembly, component of the protein translocase complex. Heterotrimer consisting of alpha (SecY), beta (SecG) and gamma (SecE) subunits. Can form oligomers of the heterotrimer.

The protein localises to the cell membrane. In terms of biological role, involved in protein export. The function of the beta subunit is unknown, but it may be involved in stabilization of the trimeric complex. This Pyrobaculum islandicum (strain DSM 4184 / JCM 9189 / GEO3) protein is Preprotein translocase subunit SecG.